A 221-amino-acid polypeptide reads, in one-letter code: Endonuclease V (221 aa).

The Mg(2+) site is built by aspartate 44 and aspartate 112.

It belongs to the endonuclease V family. Mg(2+) serves as cofactor.

It is found in the cytoplasm. The catalysed reaction is Endonucleolytic cleavage at apurinic or apyrimidinic sites to products with a 5'-phosphate.. Its function is as follows. DNA repair enzyme involved in the repair of deaminated bases. Selectively cleaves double-stranded DNA at the second phosphodiester bond 3' to a deoxyinosine leaving behind the intact lesion on the nicked DNA. The sequence is that of Endonuclease V from Nostoc sp. (strain PCC 7120 / SAG 25.82 / UTEX 2576).